We begin with the raw amino-acid sequence, 445 residues long: Methionine aminopeptidase 2-1 (445 aa).

A disordered region spans residues 1–86; that stretch reads MAAQASEDLQ…VQSEPPRVPL (86 aa). Residues 34 to 46 show a composition bias toward acidic residues; that stretch reads GEAEDDSDDDADE. Residues 59-74 are compositionally biased toward basic residues; that stretch reads AKKKKKRKSKKKKKGG. His198 is a substrate binding site. 3 residues coordinate a divalent metal cation: Asp218, Asp229, and His298. His306 contributes to the substrate binding site. A divalent metal cation contacts are provided by Glu331 and Glu426.

The protein belongs to the peptidase M24A family. Methionine aminopeptidase eukaryotic type 2 subfamily. It depends on Co(2+) as a cofactor. The cofactor is Zn(2+). Mn(2+) serves as cofactor. Requires Fe(2+) as cofactor.

It is found in the cytoplasm. It catalyses the reaction Release of N-terminal amino acids, preferentially methionine, from peptides and arylamides.. Functionally, cotranslationally removes the N-terminal methionine from nascent proteins. The N-terminal methionine is often cleaved when the second residue in the primary sequence is small and uncharged (Met-Ala-, Cys, Gly, Pro, Ser, Thr, or Val). In Aspergillus flavus (strain ATCC 200026 / FGSC A1120 / IAM 13836 / NRRL 3357 / JCM 12722 / SRRC 167), this protein is Methionine aminopeptidase 2-1.